Here is a 411-residue protein sequence, read N- to C-terminus: Signal-transducing adaptor protein 2 (411 aa).

The PH domain maps to 20-120 (HYYESFLEKK…GFILTVVELR (101 aa)). Tyrosine 22 carries the phosphotyrosine modification. The region spanning 152–248 (WCFLQVSRLE…RALVPFLLDE (97 aa)) is the SH2 domain. Tyrosine 250 carries the post-translational modification Phosphotyrosine; by PTK6. Positions 291 to 320 (VPVSVSSQEDKLPQLPPLPQLPDTDENYVT) are disordered. 2 positions are modified to phosphotyrosine: tyrosine 318 and tyrosine 330. Residues 338-364 (SSQAVPLKPKKPARLPAKPPKPSVVPK) are disordered. Residues 390–410 (TRLGDITAELEEKLQKRRALE) are a coiled coil.

As to quaternary structure, interacts with PTK6 and CSF1R. Phosphorylated on tyrosine. Phosphorylated by PTK6 at Tyr-250 modulates PTK6-mediated STAT3 activation. In terms of tissue distribution, widely expressed.

It localises to the cytoplasm. The protein resides in the membrane. Substrate of protein kinase PTK6. May play a regulatory role in the acute-phase response in systemic inflammation and may modulate STAT3 activity. This is Signal-transducing adaptor protein 2 (Stap2) from Mus musculus (Mouse).